We begin with the raw amino-acid sequence, 305 residues long: MVKPEKFIPKAVEKISKEIKDGRAIIALSGGVDSSVCAELAHRAIGGRLQPIYIDTGLMRKGETERIKHIFSHMNLDIVYAKDRFLAALKGITDPEEKRKAIGETFIRVFEEEARKLEADYLIQGTIYPDRIESEGGIKSHHNVGGLPSVMDFKKIVEPIEDLYKDEVREVAWALKLPDEICERMPFPGPGLAVRILGEVTEEKLEVAREANSIVEEELLDRFCPWQTFAAVIGKGTGVKGDIRAYGWIIAVRAVGSRDGMTAEALELPWDVLKKLESRITSEIPKVARVVYDITPKPPATIEFE.

Residues 2 to 184 (VKPEKFIPKA…LKLPDEICER (183 aa)) form the GMPS ATP-PPase domain. 29–35 (SGGVDSS) is a binding site for ATP.

Heterodimer composed of a glutamine amidotransferase subunit (A) and a GMP-binding subunit (B).

It catalyses the reaction XMP + L-glutamine + ATP + H2O = GMP + L-glutamate + AMP + diphosphate + 2 H(+). Its pathway is purine metabolism; GMP biosynthesis; GMP from XMP (L-Gln route): step 1/1. Its function is as follows. Catalyzes the synthesis of GMP from XMP. This Methanosarcina barkeri (strain Fusaro / DSM 804) protein is GMP synthase [glutamine-hydrolyzing] subunit B.